A 140-amino-acid polypeptide reads, in one-letter code: Sex-regulated protein janus-B (140 aa).

R42 lines the substrate pocket. H69 functions as the Proton acceptor in the catalytic mechanism. 110–112 lines the substrate pocket; that stretch reads SRT.

This sequence belongs to the janus family.

Its function is as follows. JanA and janB regulate somatic sex differentiation. This Drosophila sechellia (Fruit fly) protein is Sex-regulated protein janus-B (janB).